A 177-amino-acid chain; its full sequence is Shikimate kinase (177 aa).

17–22 provides a ligand contact to ATP; that stretch reads GVGKTT. Position 21 (T21) interacts with Mg(2+). D39, R63, and G86 together coordinate substrate. R125 is an ATP binding site. Substrate is bound at residue R143. R159 contacts ATP.

It belongs to the shikimate kinase family. In terms of assembly, monomer. The cofactor is Mg(2+).

It localises to the cytoplasm. It catalyses the reaction shikimate + ATP = 3-phosphoshikimate + ADP + H(+). It participates in metabolic intermediate biosynthesis; chorismate biosynthesis; chorismate from D-erythrose 4-phosphate and phosphoenolpyruvate: step 5/7. Catalyzes the specific phosphorylation of the 3-hydroxyl group of shikimic acid using ATP as a cosubstrate. This is Shikimate kinase from Bacillus licheniformis (strain ATCC 14580 / DSM 13 / JCM 2505 / CCUG 7422 / NBRC 12200 / NCIMB 9375 / NCTC 10341 / NRRL NRS-1264 / Gibson 46).